A 64-amino-acid polypeptide reads, in one-letter code: Small hydrophobic protein (64 aa).

The tract at residues 6–15 is interaction with host BCAP31; sequence ITIEFSSKFW. The helical transmembrane segment at 20-40 threads the bilayer; it reads LIHMITTIISLLIIISIMTAI. The interval 38–43 is interaction with small-molecule inhibitor; it reads TAILNK. The N-linked (GlcNAc...) asparagine; by host glycan is linked to N52.

The protein belongs to the orthopneumovirus small hydrophobic protein family. Homopentamer forming a funnel-like pore. Interacts with glycoprotein G; this interaction occurs on the surface of virion particles and infected cells. Interacts with host BCAP31 (via C-terminus); this interaction is direct. Post-translationally, four species of SH have been detected in infected cell cytoplasm: a 7.5 kDa non-glycosylated form (SH0), a 13-15 kDa form that contains one or two N-linked carbohydrate side chains of the high-mannose type (SHg), a 21-30 kDa polylactosaminoglycan-modified form of the protein (SHp), and the isoform generated by alternative translational initiation. Of these different forms, SH0 is by far the most abundant protein detected during virus infection. In terms of processing, tyrosine phosphorylated.

Its subcellular location is the virion membrane. The protein resides in the host cell membrane. It is found in the host Golgi apparatus membrane. It localises to the host endoplasmic reticulum membrane. With respect to regulation, channel activity is inhibited by copper. Also inhibited by small-molecule pyronin B. Its function is as follows. Viroporin that forms a homopentameric ion channel displaying low ion selectivity. May play a role in virus morphogenesis and pathogenicity at various stages of the viral life cycle. Accumulates at the membrane of the Golgi apparatus in infected cells and may facilitate virus release by modifying the secretory pathway. May enhance host membrane permeability and disrupt cellular ion homeostasis, which can be sensed as damage-associated molecular patterns/danger signals, triggering NLRP3 inflammasome activation and inflammatory immune response. Also inhibits host TNFA-mediated signaling pathway and may delay apoptosis, allowing time for the virus to replicate. This chain is Small hydrophobic protein (SH), found in Homo sapiens (Human).